The sequence spans 326 residues: Fructose-1,6-bisphosphatase class 1 (326 aa).

The Mg(2+) site is built by glutamate 90, aspartate 111, leucine 113, and aspartate 114. Residues 114-117 (DGSS), tyrosine 222, and lysine 253 contribute to the substrate site. Glutamate 259 provides a ligand contact to Mg(2+).

This sequence belongs to the FBPase class 1 family. As to quaternary structure, homotetramer. Requires Mg(2+) as cofactor.

The protein localises to the cytoplasm. The catalysed reaction is beta-D-fructose 1,6-bisphosphate + H2O = beta-D-fructose 6-phosphate + phosphate. It functions in the pathway carbohydrate biosynthesis; gluconeogenesis. The chain is Fructose-1,6-bisphosphatase class 1 from Citrifermentans bemidjiense (strain ATCC BAA-1014 / DSM 16622 / JCM 12645 / Bem) (Geobacter bemidjiensis).